Here is a 351-residue protein sequence, read N- to C-terminus: Ribosomal RNA large subunit methyltransferase M (351 aa).

Residues serine 186, 219 to 222, aspartate 238, aspartate 258, and aspartate 274 each bind S-adenosyl-L-methionine; that span reads APGG. Catalysis depends on lysine 303, which acts as the Proton acceptor.

Belongs to the class I-like SAM-binding methyltransferase superfamily. RNA methyltransferase RlmE family. RlmM subfamily. As to quaternary structure, monomer.

Its subcellular location is the cytoplasm. The enzyme catalyses cytidine(2498) in 23S rRNA + S-adenosyl-L-methionine = 2'-O-methylcytidine(2498) in 23S rRNA + S-adenosyl-L-homocysteine + H(+). Its function is as follows. Catalyzes the 2'-O-methylation at nucleotide C2498 in 23S rRNA. The protein is Ribosomal RNA large subunit methyltransferase M of Xylella fastidiosa (strain M23).